The following is a 355-amino-acid chain: MIEIDGSYGEGGGQVVRTAVALSAVTGKDVKVTNIRKNRPNPGLKQQHLKALETAARICEARVSGLFPGSSELFFSPVEIKGGKYEVDIGTAGSITLLLQSLMPALPFAKEKVKLTIKGGTDVAWSPTIDYLQHVTLRALEQLGYAGIVTLKKRGYYPRGGGEVSAVFEPCKLRSFHFRRVKENRRTGEARREEETRNEGRNQNQRIEIQGISHASNLPAHVPARQAEAAESLLLEAGYGSRTKIQSFELLSTGSGITLWSGYCGGSALGKKGLPAEKVGRRAAEEIILELSSKAPVDVHLADQLIPYMALAGNSSYTVRELTLHAATNIWVTEQFLDVKFRIEEKEGLFEVSVD.

ATP contacts are provided by residues glutamine 100 and 300-304; that span reads HLADQ. Histidine 325 functions as the Tele-AMP-histidine intermediate in the catalytic mechanism.

Belongs to the RNA 3'-terminal cyclase family. Type 1 subfamily.

It localises to the cytoplasm. The enzyme catalyses a 3'-end 3'-phospho-ribonucleotide-RNA + ATP = a 3'-end 2',3'-cyclophospho-ribonucleotide-RNA + AMP + diphosphate. Catalyzes the conversion of 3'-phosphate to a 2',3'-cyclic phosphodiester at the end of RNA. The mechanism of action of the enzyme occurs in 3 steps: (A) adenylation of the enzyme by ATP; (B) transfer of adenylate to an RNA-N3'P to produce RNA-N3'PP5'A; (C) and attack of the adjacent 2'-hydroxyl on the 3'-phosphorus in the diester linkage to produce the cyclic end product. The biological role of this enzyme is unknown but it is likely to function in some aspects of cellular RNA processing. The polypeptide is RNA 3'-terminal phosphate cyclase (Methanosarcina acetivorans (strain ATCC 35395 / DSM 2834 / JCM 12185 / C2A)).